Reading from the N-terminus, the 292-residue chain is Probable endonuclease lcl3 (292 aa).

Residues 1–27 are disordered; sequence MRWPPWSSESTNDEQKQTPSSWLSSAA. Residues 17–27 show a composition bias toward polar residues; the sequence is QTPSSWLSSAA. A helical transmembrane segment spans residues 45 to 61; that stretch reads IIPTVVLTSGILIAVRF. The 168-residue stretch at 83–250 folds into the TNase-like domain; sequence RSIFGQVTSV…KKRARGLWKD (168 aa). The active site involves R134. Ca(2+) is bound at residue D139. Catalysis depends on residues E142 and R182. The tract at residues 257–292 is disordered; it reads GWESPREYKNRMGMGDPLPIEKGNGKGNGKGKIGQK. Residues 281-292 show a composition bias toward gly residues; the sequence is GKGNGKGKIGQK.

Belongs to the LCL3 family.

It localises to the mitochondrion. It is found in the membrane. This Penicillium rubens (strain ATCC 28089 / DSM 1075 / NRRL 1951 / Wisconsin 54-1255) (Penicillium chrysogenum) protein is Probable endonuclease lcl3 (lcl3).